We begin with the raw amino-acid sequence, 452 residues long: MISQFFILSSKGDPLIYKDFRGDSGGRDVAELFYRKLTGLPGDESPVVMHHDDRHFIHIRHSGLYLVATTSENISPFSLLELLSRLATLLGDYCGSLGEATISRNVALVYELLDEVLDYGYVQTTSTEVLRNFIQTEAVVSKPFSLFDLSSVGLFGAETQQSKVAPSSAASRPVLSSRSDQSQKNEVFLDVVERLSVLIASNGSLLKVDVQGEIRLKSFLPSGSEMRIGLTEEFCVGKSELRGYGPGIRVDEVSFHSSVYLDEFESHRILRLQPPQGELTVMRYQLSDDLPSPLPFRLFPSVQWDRGSGRLQVYLKLRCDLPPKSQALNVRLHLPLPRGVVSLSQELSSPEQKAELGEGALRWDLPRVQGGSQLSGLFQMDVPGLPGPPGQGPSASAPLGLGPASLSFELPRHTCSGLQVRFLRLAFRPCGNANPHKWVRHLSHSDAYVIRI.

Residues 184–451 enclose the MHD domain; that stretch reads KNEVFLDVVE…LSHSDAYVIR (268 aa).

It belongs to the adaptor complexes medium subunit family. Adaptor protein complex 4 (AP-4) is a heterotetramer composed of two large adaptins (epsilon-type subunit AP4E1 and beta-type subunit AP4B1), a medium adaptin (mu-type subunit AP4M1) and a small adaptin (sigma-type AP4S1). Interacts with tyrosine-based sorting signals on the cytoplasmic tail of cargo proteins such as APP, ATG9A, LAMP2 and NAGPA. Interacts with the C-terminal domain of GRID2. Interacts with GRIA1 and GRIA2; the interaction is indirect via CACNG3. Interacts with CACNG3; CACNG3 associates GRIA1 and GRIA2 with the adaptor protein complex 4 (AP-4) to target them to the somatodendritic compartment of neurons. Interacts with HOOK1 and HOOK2; the interactions are direct, mediate the interaction between FTS-Hook-FHIP (FHF) complex and AP-4 and the perinuclear distribution of AP-4.

The protein localises to the golgi apparatus. It is found in the trans-Golgi network membrane. Its subcellular location is the early endosome. Functionally, component of the adaptor protein complex 4 (AP-4). Adaptor protein complexes are vesicle coat components involved both in vesicle formation and cargo selection. They control the vesicular transport of proteins in different trafficking pathways. AP-4 forms a non clathrin-associated coat on vesicles departing the trans-Golgi network (TGN) and may be involved in the targeting of proteins from the trans-Golgi network (TGN) to the endosomal-lysosomal system. It is also involved in protein sorting to the basolateral membrane in epithelial cells and the proper asymmetric localization of somatodendritic proteins in neurons. Within AP-4, the mu-type subunit AP4M1 is directly involved in the recognition and binding of tyrosine-based sorting signals found in the cytoplasmic part of cargos. The adaptor protein complex 4 (AP-4) may also recognize other types of sorting signal. The protein is AP-4 complex subunit mu-1 of Bos taurus (Bovine).